We begin with the raw amino-acid sequence, 105 residues long: Nitrogenase-stabilizing/protective protein NifW (105 aa).

Belongs to the NifW family. Homotrimer; associates with NifD.

Its function is as follows. May protect the nitrogenase Fe-Mo protein from oxidative damage. The polypeptide is Nitrogenase-stabilizing/protective protein NifW (Rhodospirillum centenum (strain ATCC 51521 / SW)).